The chain runs to 240 residues: ATP-dependent dethiobiotin synthetase BioD (240 aa).

An ATP-binding site is contributed by G13–I18. T17 contacts Mg(2+). The active site involves K38. Substrate is bound at residue T42. ATP-binding positions include D55, E116 to G119, and P214 to L216. Residues D55 and E116 each contribute to the Mg(2+) site.

Belongs to the dethiobiotin synthetase family. Homodimer. Mg(2+) is required as a cofactor.

It localises to the cytoplasm. The catalysed reaction is (7R,8S)-7,8-diammoniononanoate + CO2 + ATP = (4R,5S)-dethiobiotin + ADP + phosphate + 3 H(+). The protein operates within cofactor biosynthesis; biotin biosynthesis; biotin from 7,8-diaminononanoate: step 1/2. In terms of biological role, catalyzes a mechanistically unusual reaction, the ATP-dependent insertion of CO2 between the N7 and N8 nitrogen atoms of 7,8-diaminopelargonic acid (DAPA, also called 7,8-diammoniononanoate) to form a ureido ring. The chain is ATP-dependent dethiobiotin synthetase BioD from Thermodesulfovibrio yellowstonii (strain ATCC 51303 / DSM 11347 / YP87).